The chain runs to 448 residues: Signal recognition particle 54 kDa protein (448 aa).

GTP contacts are provided by residues 107-114 (GIQGSGKT), 189-193 (DSAGR), and 247-250 (TKLD).

Belongs to the GTP-binding SRP family. SRP54 subfamily. In terms of assembly, part of the signal recognition particle protein translocation system, which is composed of SRP and FtsY. Archaeal SRP consists of a 7S RNA molecule of 300 nucleotides and two protein subunits: SRP54 and SRP19.

It is found in the cytoplasm. It catalyses the reaction GTP + H2O = GDP + phosphate + H(+). In terms of biological role, involved in targeting and insertion of nascent membrane proteins into the cytoplasmic membrane. Binds to the hydrophobic signal sequence of the ribosome-nascent chain (RNC) as it emerges from the ribosomes. The SRP-RNC complex is then targeted to the cytoplasmic membrane where it interacts with the SRP receptor FtsY. The chain is Signal recognition particle 54 kDa protein from Thermococcus onnurineus (strain NA1).